The following is a 359-amino-acid chain: 3-dehydroquinate synthase (359 aa).

Residues 71 to 76, 105 to 109, 129 to 130, Lys142, Lys151, and 169 to 172 contribute to the NAD(+) site; these read DGEQFK, GVIGD, TT, and CLHT. Zn(2+) contacts are provided by Glu184, His247, and His264.

It belongs to the sugar phosphate cyclases superfamily. Dehydroquinate synthase family. Co(2+) is required as a cofactor. Zn(2+) serves as cofactor. Requires NAD(+) as cofactor.

Its subcellular location is the cytoplasm. It carries out the reaction 7-phospho-2-dehydro-3-deoxy-D-arabino-heptonate = 3-dehydroquinate + phosphate. The protein operates within metabolic intermediate biosynthesis; chorismate biosynthesis; chorismate from D-erythrose 4-phosphate and phosphoenolpyruvate: step 2/7. Functionally, catalyzes the conversion of 3-deoxy-D-arabino-heptulosonate 7-phosphate (DAHP) to dehydroquinate (DHQ). This is 3-dehydroquinate synthase from Shewanella sp. (strain W3-18-1).